The following is an 888-amino-acid chain: Alanine--tRNA ligase (888 aa).

4 residues coordinate Zn(2+): histidine 573, histidine 577, cysteine 676, and histidine 680.

This sequence belongs to the class-II aminoacyl-tRNA synthetase family. It depends on Zn(2+) as a cofactor.

It localises to the cytoplasm. It carries out the reaction tRNA(Ala) + L-alanine + ATP = L-alanyl-tRNA(Ala) + AMP + diphosphate. In terms of biological role, catalyzes the attachment of alanine to tRNA(Ala) in a two-step reaction: alanine is first activated by ATP to form Ala-AMP and then transferred to the acceptor end of tRNA(Ala). Also edits incorrectly charged Ser-tRNA(Ala) and Gly-tRNA(Ala) via its editing domain. This chain is Alanine--tRNA ligase, found in Corynebacterium glutamicum (strain R).